The primary structure comprises 427 residues: Trigger factor (427 aa).

The PPIase FKBP-type domain occupies 163-248; it reads GDVVNLDFDG…INEVKSKEVP (86 aa).

This sequence belongs to the FKBP-type PPIase family. Tig subfamily.

Its subcellular location is the cytoplasm. The catalysed reaction is [protein]-peptidylproline (omega=180) = [protein]-peptidylproline (omega=0). Functionally, involved in protein export. Acts as a chaperone by maintaining the newly synthesized protein in an open conformation. Functions as a peptidyl-prolyl cis-trans isomerase. This is Trigger factor from Macrococcus caseolyticus (strain JCSC5402) (Macrococcoides caseolyticum).